The chain runs to 29 residues: Galanin (29 aa).

A29 is subject to Alanine amide.

Belongs to the galanin family.

It is found in the secreted. Functionally, contracts smooth muscle of the gastrointestinal and genitourinary tract, regulates growth hormone release, modulates insulin release, and may be involved in the control of adrenal secretion. The sequence is that of Galanin (gal) from Pelophylax ridibundus (Marsh frog).